The chain runs to 411 residues: Citrate synthase (411 aa).

Active-site residues include His-304 and Asp-363.

The protein belongs to the citrate synthase family.

The enzyme catalyses oxaloacetate + acetyl-CoA + H2O = citrate + CoA + H(+). It participates in carbohydrate metabolism; tricarboxylic acid cycle; isocitrate from oxaloacetate: step 1/2. In Rickettsia conorii subsp. caspia (strain A-167) (Astrakhan rickettsia), this protein is Citrate synthase (gltA).